The primary structure comprises 893 residues: Major vault protein (893 aa).

An N-acetylalanine modification is found at Ala-2. 9 MVP repeats span residues Ala-2–Arg-56, His-57–Pro-111, Leu-112–Gln-164, Ala-165–Asp-217, Ala-218–Pro-272, Ile-273–Val-323, Tyr-324–Ala-379, Ile-380–Val-457, and Val-458–Pro-520. Residue Lys-444 forms a Glycyl lysine isopeptide (Lys-Gly) (interchain with G-Cter in SUMO2) linkage. Ser-445 bears the Phosphoserine mark. Lys-704 is covalently cross-linked (Glycyl lysine isopeptide (Lys-Gly) (interchain with G-Cter in SUMO2)). The tract at residues Gln-856–Arg-893 is disordered.

As to quaternary structure, the vault ribonucleoprotein particle is a huge (400 A x 670 A) cage structure of 12.9 MDa. It consists of a dimer of half-vaults, with each half-vault comprising 39 identical major vault protein (MVP) chains, PARP4 and one or more vault RNAs (vRNAs). Interacts with TEP1. Interacts with PTEN and activated MAPK1. The phosphorylated protein interacts with the SH2 domains of PTPN11 and SRC. Interacts with APEX1. May interact with ZNF540. Phosphorylated on Tyr residues after EGF stimulation. Post-translationally, dephosphorylated by PTPN11. Present in most normal tissues. Higher expression observed in epithelial cells with secretory and excretory functions, as well as in cells chronically exposed to xenobiotics, such as bronchial cells and cells lining the intestine. Overexpressed in many multidrug-resistant cancer cells.

The protein resides in the cytoplasm. The protein localises to the nucleus. It localises to the nuclear pore complex. Its subcellular location is the perinuclear region. Its function is as follows. Required for normal vault structure. Vaults are multi-subunit structures that may act as scaffolds for proteins involved in signal transduction. Vaults may also play a role in nucleo-cytoplasmic transport. Down-regulates IFNG-mediated STAT1 signaling and subsequent activation of JAK. Down-regulates SRC activity and signaling through MAP kinases. This Homo sapiens (Human) protein is Major vault protein (MVP).